Reading from the N-terminus, the 326-residue chain is Target of rapamycin complex subunit lst8 (326 aa).

WD repeat units lie at residues 1–37 (MNVN…CTRT), 40–80 (HQDS…PVIN), 83–122 (GVSK…LQCQ), 126–165 (QVNA…NEQL), 168–207 (EPDV…GDEV), 218–257 (AHKR…LMTE), and 268–309 (TSRG…REYS).

Belongs to the WD repeat LST8 family. Part of the mechanistic target of rapamycin complex 1 (mTORC1) which contains MTOR, MLST8 and RPTOR. Component of the mechanistic target of rapamycin complex 2 (mTORC2), consisting in two heterotretramers composed of MTOR, MLST8, RICTOR and MAPKAP1/SIN1.

It is found in the lysosome membrane. The protein localises to the cytoplasm. Subunit of both mTORC1 and mTORC2, which regulates cell growth and survival in response to nutrient and hormonal signals. mTORC1 is activated in response to growth factors or amino acids. In response to nutrients, mTORC1 is recruited to the lysosome membrane and promotes protein, lipid and nucleotide synthesis by phosphorylating several substrates, such as ribosomal protein S6 kinase (RPS6KB1 and RPS6KB2) and EIF4EBP1 (4E-BP1). In the same time, it inhibits catabolic pathways by phosphorylating the autophagy initiation components ULK1 and ATG13, as well as transcription factor TFEB, a master regulators of lysosomal biogenesis and autophagy. The mTORC1 complex is inhibited in response to starvation and amino acid depletion. Within mTORC1, MLST8 interacts directly with MTOR and enhances its kinase activity. In nutrient-poor conditions, stabilizes the MTOR-RPTOR interaction and favors RPTOR-mediated inhibition of MTOR activity. As part of the mTORC2 complex, transduces signals from growth factors to pathways involved in proliferation, cytoskeletal organization, lipogenesis and anabolic output. mTORC2 is also activated by growth factors, but seems to be nutrient-insensitive. In response to growth factors, mTORC2 phosphorylates and activates AGC protein kinase family members, including AKT (AKT1, AKT2 and AKT3), PKC (PRKCA, PRKCB and PRKCE) and SGK1. mTORC2 functions upstream of Rho GTPases to regulate the actin cytoskeleton, probably by activating one or more Rho-type guanine nucleotide exchange factors. mTORC2 promotes the serum-induced formation of stress-fibers or F-actin. Within mTORC2, MLST8 acts as a bridge between MAPKAP1/SIN1 and MTOR. In Danio rerio (Zebrafish), this protein is Target of rapamycin complex subunit lst8 (mlst8).